A 4239-amino-acid chain; its full sequence is Tenellin synthetase (4239 aa).

Residues 15-454 form the Ketosynthase family 3 (KS3) domain; sequence SEPIAIIGSA…GTNAHAIIER (440 aa). Active-site for beta-ketoacyl synthase activity residues include Cys-189, His-326, and His-374. A malonyl-CoA:ACP transacylase (MAT) domain region spans residues 589–923; it reads VFTGQGAQWP…ANDAVAFSTA (335 aa). An N-terminal hotdog fold region spans residues 993–1135; that stretch reads HELLGRRTPD…GRIAVQLGAK (143 aa). Residues 993-1310 are dehydratase (DH) domain; sequence HELLGRRTPD…GFEVRAVGEP (318 aa). One can recognise a PKS/mFAS DH domain in the interval 993-1313; it reads HELLGRRTPD…VRAVGEPDAS (321 aa). His-1025 functions as the Proton acceptor; for dehydratase activity in the catalytic mechanism. Residues 1158–1313 are C-terminal hotdog fold; the sequence is LQQLDCEKLY…VRAVGEPDAS (156 aa). Asp-1217 functions as the Proton donor; for dehydratase activity in the catalytic mechanism. A methyltransferase (MT) domain region spans residues 1459–1652; the sequence is RLYTEDKGMH…FSGVDHIVHD (194 aa). The segment at 2209 to 2382 is ketoreductase (KR) domain; it reads TYLMVGAAGG…AASIIHVGHV (174 aa). In terms of domain architecture, Carrier 1 spans 2502 to 2582; sequence EAAVAALKGF…QLSALAAKLA (81 aa). An O-(pantetheine 4'-phosphoryl)serine modification is found at Ser-2542. Disordered regions lie at residues 2587-2629 and 2642-2712; these read KKRA…EIAQ and LEAS…FFTQ. Composition is skewed to polar residues over residues 2648 to 2662 and 2670 to 2681; these read GGSS…SSVS and ESTLQSSDNNGE. Residues 2682–2698 are compositionally biased toward low complexity; sequence STPSKSSNCNSDSGSDN. The condensation (C) domain stretch occupies residues 2723-3169; the sequence is REAPMSPAQS…SAQSVGDCVV (447 aa). The segment at 3203 to 3614 is adenylation (A) (KR) domain; the sequence is CQQHSTKSAI…DGTLLCFGRI (412 aa). The disordered stretch occupies residues 3728–3752; sequence EAAAATSPSNNNINNNTPSGGGGEK. A compositionally biased stretch (low complexity) spans 3729 to 3745; sequence AAAATSPSNNNINNNTP. Residues 3751-3835 form the Carrier 2 domain; that stretch reads EKMTVRQGEL…GMARCVAEQR (85 aa). At Ser-3795 the chain carries O-(pantetheine 4'-phosphoryl)serine. The tract at residues 3862-3892 is disordered; it reads EKLQHSSASSSSSSSSSSSAGSSSTQRPRKT. The segment covering 3867–3885 has biased composition (low complexity); the sequence is SSASSSSSSSSSSSAGSSS. The interval 3899 to 4145 is reductase (RED) domain; it reads LTGATGFLGG…LDFGQVDKVV (247 aa).

This sequence in the C-terminal section; belongs to the NRP synthetase family.

It participates in secondary metabolite biosynthesis. In terms of biological role, hybrid PKS-NRPS synthetase; part of the gene cluster that mediates the biosynthesis of tenellin-type 2-pyridones, iron-chelating compounds involved in iron stress tolerance, competition with the natural competitor fungus Metarhizium robertsii and insect hosts infection. TenS catalyzes the assembly of the polyketide-amino acid backbone. Because tenS lacks a designated enoylreductase (ER) domain, the required activity is provided the enoyl reductase tenC. Upon formation of the polyketide backbone on the thiotemplate, the triketide is transferred to the NRPS module and linked to tyrosine to produce the pyrrolidine-2-dione intermediates, including pretellinin A, 11-hydropretellenin A, 12-hydropretellenin A, 13-hydropretellenin A, 14-hydropretellenin A, 12-oxopretellenin A and prototellinin D. The pathway begins with the assembly of the polyketide-amino acid backbone by the hybrid PKS-NRPS tenS with the help of the enoyl reductase tenC. These enzymes catalyze the synthesis of the pyrrolidine-2-dione intermediates pretellinin A, 11-hydropretellenin A, 12-hydropretellenin A, 13-hydropretellenin A, 14-hydropretellenin A, 12-oxopretellenin A and prototellinin D. The cytochrome P450 monooxygenase tenA then catalyzes an oxidative ring expansion of pretenellin A and 14-hydropretellenin A to form the 2-pyridone core, leading to pretenellin B and pyridovericin, respectively. The cytochrome P450 monooxygenase tenB is then required for the selective N-hydroxylation of the 2-pyridone nitrogen of yield tellinin and 15-hydroxytellenin (15-HT), respectively. The UDP-glucosyltransferase GT1 and the methyltransferase MT1, located outside the tenS gene cluster, contribute to the stepwise glycosylation and methylation of 15-HT to obtain the glycoside pyridovericin-N-O-(4-O-methyl-beta-D-glucopyranoside) (PMGP). Additional related compounds such as 1-O-methyl-15-HT, (8Z)-1-O-methyl-15-HT, and O-methyltenellin A are also produced but the enzymes involved in their biosynthesis have still to be determined. The polypeptide is Tenellin synthetase (Beauveria bassiana (White muscardine disease fungus)).